Reading from the N-terminus, the 89-residue chain is RNA-binding protein Hfq (89 aa).

Residues 14-73 enclose the Sm domain; sequence DPYLNALRKEKINVAIYLVNGVKLQGRVDSFDQFVVLLRSNVTQMVYKHAISTIVPARDP.

This sequence belongs to the Hfq family. Homohexamer.

In terms of biological role, RNA chaperone that binds small regulatory RNA (sRNAs) and mRNAs to facilitate mRNA translational regulation in response to envelope stress, environmental stress and changes in metabolite concentrations. Also binds with high specificity to tRNAs. The sequence is that of RNA-binding protein Hfq from Hydrogenovibrio crunogenus (strain DSM 25203 / XCL-2) (Thiomicrospira crunogena).